A 232-amino-acid chain; its full sequence is Large ribosomal subunit protein uL1 (232 aa).

This sequence belongs to the universal ribosomal protein uL1 family. In terms of assembly, part of the 50S ribosomal subunit.

In terms of biological role, binds directly to 23S rRNA. The L1 stalk is quite mobile in the ribosome, and is involved in E site tRNA release. Protein L1 is also a translational repressor protein, it controls the translation of the L11 operon by binding to its mRNA. The sequence is that of Large ribosomal subunit protein uL1 from Syntrophus aciditrophicus (strain SB).